Here is a 184-residue protein sequence, read N- to C-terminus: ATP-dependent protease subunit HslV (184 aa).

Residue threonine 8 is part of the active site. 3 residues coordinate Na(+): glycine 165, aspartate 168, and threonine 171.

This sequence belongs to the peptidase T1B family. HslV subfamily. A double ring-shaped homohexamer of HslV is capped on each side by a ring-shaped HslU homohexamer. The assembly of the HslU/HslV complex is dependent on binding of ATP.

It localises to the cytoplasm. The catalysed reaction is ATP-dependent cleavage of peptide bonds with broad specificity.. With respect to regulation, allosterically activated by HslU binding. Its function is as follows. Protease subunit of a proteasome-like degradation complex believed to be a general protein degrading machinery. The polypeptide is ATP-dependent protease subunit HslV (Pediococcus pentosaceus (strain ATCC 25745 / CCUG 21536 / LMG 10740 / 183-1w)).